A 184-amino-acid polypeptide reads, in one-letter code: Deoxyuridine 5'-triphosphate nucleotidohydrolase (184 aa).

Over residues 1 to 16 (MPHTQTDAHQNNQENF) the composition is skewed to polar residues. The segment at 1 to 25 (MPHTQTDAHQNNQENFSSSLISSRP) is disordered. Substrate-binding positions include 96–98 (RSG), N109, 113–115 (TID), and K123. The segment at 165-184 (STKNTVGNRGAGGFGSTGHD) is disordered. Positions 173–184 (RGAGGFGSTGHD) are enriched in gly residues.

Belongs to the dUTPase family. It depends on Mg(2+) as a cofactor.

It carries out the reaction dUTP + H2O = dUMP + diphosphate + H(+). It functions in the pathway pyrimidine metabolism; dUMP biosynthesis; dUMP from dCTP (dUTP route): step 2/2. Functionally, this enzyme is involved in nucleotide metabolism: it produces dUMP, the immediate precursor of thymidine nucleotides and it decreases the intracellular concentration of dUTP so that uracil cannot be incorporated into DNA. In Bartonella henselae (strain ATCC 49882 / DSM 28221 / CCUG 30454 / Houston 1) (Rochalimaea henselae), this protein is Deoxyuridine 5'-triphosphate nucleotidohydrolase.